The sequence spans 432 residues: D-amino acid dehydrogenase (432 aa).

3 to 17 (VLVLGSGVVGTASAY) is an FAD binding site.

This sequence belongs to the DadA oxidoreductase family. Requires FAD as cofactor.

The enzyme catalyses a D-alpha-amino acid + A + H2O = a 2-oxocarboxylate + AH2 + NH4(+). It functions in the pathway amino-acid degradation; D-alanine degradation; NH(3) and pyruvate from D-alanine: step 1/1. In terms of biological role, oxidative deamination of D-amino acids. This chain is D-amino acid dehydrogenase, found in Stutzerimonas stutzeri (strain A1501) (Pseudomonas stutzeri).